A 45-amino-acid polypeptide reads, in one-letter code: Cytochrome b559 subunit beta (45 aa).

Residues 20–36 form a helical membrane-spanning segment; that stretch reads WLALHTLGVPTVFFLGA. H24 serves as a coordination point for heme.

Belongs to the PsbE/PsbF family. In terms of assembly, heterodimer of an alpha subunit and a beta subunit. PSII is composed of 1 copy each of membrane proteins PsbA, PsbB, PsbC, PsbD, PsbE, PsbF, PsbH, PsbI, PsbJ, PsbK, PsbL, PsbM, PsbT, PsbX, PsbY, PsbZ, Psb30/Ycf12, peripheral proteins PsbO, CyanoQ (PsbQ), PsbU, PsbV and a large number of cofactors. It forms dimeric complexes. Requires heme b as cofactor.

It localises to the cellular thylakoid membrane. Functionally, this b-type cytochrome is tightly associated with the reaction center of photosystem II (PSII). PSII is a light-driven water:plastoquinone oxidoreductase that uses light energy to abstract electrons from H(2)O, generating O(2) and a proton gradient subsequently used for ATP formation. It consists of a core antenna complex that captures photons, and an electron transfer chain that converts photonic excitation into a charge separation. The polypeptide is Cytochrome b559 subunit beta (Parasynechococcus marenigrum (strain WH8102)).